Reading from the N-terminus, the 429-residue chain is Histidine--tRNA ligase (429 aa).

It belongs to the class-II aminoacyl-tRNA synthetase family. As to quaternary structure, homodimer.

The protein resides in the cytoplasm. The catalysed reaction is tRNA(His) + L-histidine + ATP = L-histidyl-tRNA(His) + AMP + diphosphate + H(+). The polypeptide is Histidine--tRNA ligase (Alkalilimnicola ehrlichii (strain ATCC BAA-1101 / DSM 17681 / MLHE-1)).